A 337-amino-acid polypeptide reads, in one-letter code: DNA-directed RNA polymerase subunit alpha (337 aa).

Positions methionine 1–glutamate 233 are alpha N-terminal domain (alpha-NTD). The interval phenylalanine 249–tyrosine 337 is alpha C-terminal domain (alpha-CTD).

This sequence belongs to the RNA polymerase alpha chain family. In terms of assembly, homodimer. The RNAP catalytic core consists of 2 alpha, 1 beta, 1 beta' and 1 omega subunit. When a sigma factor is associated with the core the holoenzyme is formed, which can initiate transcription.

The catalysed reaction is RNA(n) + a ribonucleoside 5'-triphosphate = RNA(n+1) + diphosphate. Functionally, DNA-dependent RNA polymerase catalyzes the transcription of DNA into RNA using the four ribonucleoside triphosphates as substrates. This chain is DNA-directed RNA polymerase subunit alpha, found in Brucella abortus (strain S19).